The chain runs to 562 residues: Formate--tetrahydrofolate ligase (562 aa).

70–77 contacts ATP; it reads TPAGEGKS.

The protein belongs to the formate--tetrahydrofolate ligase family.

It carries out the reaction (6S)-5,6,7,8-tetrahydrofolate + formate + ATP = (6R)-10-formyltetrahydrofolate + ADP + phosphate. The protein operates within one-carbon metabolism; tetrahydrofolate interconversion. This is Formate--tetrahydrofolate ligase from Paenarthrobacter aurescens (strain TC1).